A 315-amino-acid polypeptide reads, in one-letter code: Probable cell division protein WhiA (315 aa).

The segment at residues 275–309 is a DNA-binding region (H-T-H motif); the sequence is NLKELGEMVPSGVVSKSGINHRLRKINEIADKIRE.

The protein belongs to the WhiA family.

Its function is as follows. Involved in cell division and chromosome segregation. The polypeptide is Probable cell division protein WhiA (Brevibacillus brevis (strain 47 / JCM 6285 / NBRC 100599)).